The chain runs to 593 residues: Probable metalloprotease ARX1 (593 aa).

The protein belongs to the peptidase M24 family. In terms of assembly, component of the nucleoplasmic and cytoplasmic pre-60S ribosomal particles. Interacts directly with REI1.

It localises to the cytoplasm. It is found in the nucleus. Probable metalloprotease involved in proper assembly of pre-ribosomal particles during the biogenesis of the 60S ribosomal subunit. Accompanies the pre-60S particles to the cytoplasm. The chain is Probable metalloprotease ARX1 (ARX1) from Saccharomyces cerevisiae (strain ATCC 204508 / S288c) (Baker's yeast).